A 186-amino-acid polypeptide reads, in one-letter code: Ribosome-recycling factor (186 aa).

This sequence belongs to the RRF family.

The protein resides in the cytoplasm. In terms of biological role, responsible for the release of ribosomes from messenger RNA at the termination of protein biosynthesis. May increase the efficiency of translation by recycling ribosomes from one round of translation to another. This Cupriavidus metallidurans (strain ATCC 43123 / DSM 2839 / NBRC 102507 / CH34) (Ralstonia metallidurans) protein is Ribosome-recycling factor.